The sequence spans 284 residues: tRNA uridine(34) hydroxylase (284 aa).

Positions 132-226 constitute a Rhodanese domain; that stretch reads AGRPVVMLDT…YFEEVGGAHY (95 aa). The Cysteine persulfide intermediate role is filled by C186.

The protein belongs to the TrhO family.

It carries out the reaction uridine(34) in tRNA + AH2 + O2 = 5-hydroxyuridine(34) in tRNA + A + H2O. In terms of biological role, catalyzes oxygen-dependent 5-hydroxyuridine (ho5U) modification at position 34 in tRNAs. In Burkholderia cenocepacia (strain HI2424), this protein is tRNA uridine(34) hydroxylase.